A 639-amino-acid polypeptide reads, in one-letter code: Protein zwilch homolog (639 aa).

The span at 76–95 shows a compositional bias: basic and acidic residues; sequence QKTSSLLNRRENKKTIKSEK. A disordered region spans residues 76–116; the sequence is QKTSSLLNRRENKKTIKSEKEDESMDMETAEGDKENTVSET. Residues 96–105 show a composition bias toward acidic residues; that stretch reads EDESMDMETA.

It belongs to the ZWILCH family. Component of the RZZ complex composed of rod-1, czw-1 and zwl-1. Interacts with the spindly-like protein spdl-1. Interacts with NDC80 complex component ndc-80.

Its subcellular location is the cytoplasm. The protein localises to the cell cortex. It is found in the chromosome. The protein resides in the centromere. It localises to the kinetochore. Its subcellular location is the cytoskeleton. The protein localises to the spindle. Functionally, essential component of the mitotic checkpoint, which prevents cells from prematurely exiting mitosis. Required for chromosome segregation, the assembly of the dynein-dynactin and mdf-1-mdf-2 complexes onto kinetochores and spindle pole separation. Its function related to the spindle assembly machinery and kinetochore-microtubule attachments likely depends on its association in the mitotic RZZ complex. The RZZ complex recruits the spindly-like protein spdl-1 to kinetochores. To prevent irregular chromosome segregation, the complex also inhibits the attachment of the kinetochore-associated NDC80 complex to microtubules. The recruitment of spdl-1 to kinetochores relieves this inhibition. Required for embryonic development. The sequence is that of Protein zwilch homolog (zwl-1) from Caenorhabditis briggsae.